Consider the following 101-residue polypeptide: Venom peptide Pc (101 aa).

Residues 1–20 (MSHLRIAVIFLCTLFALTAG) form the signal peptide.

It belongs to the scorpion La1-like peptide family. Contains 4 disulfide bonds. As to expression, expressed by the venom gland.

Its subcellular location is the secreted. In Pandinus cavimanus (Tanzanian red clawed scorpion), this protein is Venom peptide Pc.